We begin with the raw amino-acid sequence, 368 residues long: Leu/Ile/Val-binding protein homolog 3 (368 aa).

A signal peptide spans 1 to 23; sequence MNLKLLSSVAFAATIGFASAAYA.

Belongs to the leucine-binding protein family.

In terms of biological role, component of an amino-acid transport system. This Brucella melitensis biotype 1 (strain ATCC 23456 / CCUG 17765 / NCTC 10094 / 16M) protein is Leu/Ile/Val-binding protein homolog 3.